A 295-amino-acid polypeptide reads, in one-letter code: Glucose-1-phosphate thymidylyltransferase (295 aa).

The Mg(2+) site is built by Asp-111 and Asp-226.

It belongs to the glucose-1-phosphate thymidylyltransferase family. Homotetramer. It depends on Mg(2+) as a cofactor.

It catalyses the reaction dTTP + alpha-D-glucose 1-phosphate + H(+) = dTDP-alpha-D-glucose + diphosphate. Its pathway is carbohydrate biosynthesis; dTDP-L-rhamnose biosynthesis. It participates in bacterial outer membrane biogenesis; LPS O-antigen biosynthesis. Catalyzes the formation of dTDP-glucose, from dTTP and glucose 1-phosphate, as well as its pyrophosphorolysis. In Xanthomonas campestris pv. campestris (strain B100), this protein is Glucose-1-phosphate thymidylyltransferase (rmlA).